A 299-amino-acid chain; its full sequence is 4-hydroxy-tetrahydrodipicolinate synthase 2 (299 aa).

Pyruvate is bound at residue Thr-54. The active-site Proton donor/acceptor is the Tyr-142. Lys-170 acts as the Schiff-base intermediate with substrate in catalysis. Pyruvate is bound at residue Val-210.

Belongs to the DapA family. In terms of assembly, homotetramer; dimer of dimers.

The protein resides in the cytoplasm. The catalysed reaction is L-aspartate 4-semialdehyde + pyruvate = (2S,4S)-4-hydroxy-2,3,4,5-tetrahydrodipicolinate + H2O + H(+). Its pathway is amino-acid biosynthesis; L-lysine biosynthesis via DAP pathway; (S)-tetrahydrodipicolinate from L-aspartate: step 3/4. Catalyzes the condensation of (S)-aspartate-beta-semialdehyde [(S)-ASA] and pyruvate to 4-hydroxy-tetrahydrodipicolinate (HTPA). The polypeptide is 4-hydroxy-tetrahydrodipicolinate synthase 2 (Streptomyces coelicolor (strain ATCC BAA-471 / A3(2) / M145)).